The primary structure comprises 510 residues: NAD(P)H-quinone oxidoreductase subunit 2 A, chloroplastic (510 aa).

Helical transmembrane passes span 31–51 (FIFP…IDLT), 59–79 (WFYF…LFRW), 99–119 (IFQF…VEYI), 124–144 (MAIT…MFLC), 149–169 (LITI…LSGY), 183–203 (YLLM…WLYG), 229–249 (ISIA…PAPF), 295–315 (WHLL…LLAI), 323–343 (MLAY…IVGD), 354–374 (YMLF…LFGL), 395–415 (ALSL…AGFF), and 418–438 (LYLF…IGLL).

This sequence belongs to the complex I subunit 2 family. As to quaternary structure, NDH is composed of at least 16 different subunits, 5 of which are encoded in the nucleus.

It is found in the plastid. Its subcellular location is the chloroplast thylakoid membrane. It carries out the reaction a plastoquinone + NADH + (n+1) H(+)(in) = a plastoquinol + NAD(+) + n H(+)(out). It catalyses the reaction a plastoquinone + NADPH + (n+1) H(+)(in) = a plastoquinol + NADP(+) + n H(+)(out). Functionally, NDH shuttles electrons from NAD(P)H:plastoquinone, via FMN and iron-sulfur (Fe-S) centers, to quinones in the photosynthetic chain and possibly in a chloroplast respiratory chain. The immediate electron acceptor for the enzyme in this species is believed to be plastoquinone. Couples the redox reaction to proton translocation, and thus conserves the redox energy in a proton gradient. The sequence is that of NAD(P)H-quinone oxidoreductase subunit 2 A, chloroplastic from Saccharum officinarum (Sugarcane).